A 1096-amino-acid polypeptide reads, in one-letter code: Eukaryotic translation initiation factor 3 subunit A (1096 aa).

Residues Gln-323–Ala-502 form the PCI domain. Coiled-coil stretches lie at residues Ser-591–Lys-643, Ser-677–Lys-761, and Lys-811–Ala-839. Over residues Glu-808–Val-852 the composition is skewed to basic and acidic residues. The interval Glu-808 to Lys-1096 is disordered. Residues Ala-865 to Ser-875 are compositionally biased toward polar residues. Composition is skewed to basic and acidic residues over residues Phe-878–Glu-890, Ser-933–Ala-942, and Gln-955–Glu-973. The segment covering Asp-1008–Trp-1023 has biased composition (polar residues). Over residues Gly-1085 to Lys-1096 the composition is skewed to basic and acidic residues.

This sequence belongs to the eIF-3 subunit A family. As to quaternary structure, component of the eukaryotic translation initiation factor 3 (eIF-3) complex.

The protein localises to the cytoplasm. In terms of biological role, RNA-binding component of the eukaryotic translation initiation factor 3 (eIF-3) complex, which is involved in protein synthesis of a specialized repertoire of mRNAs and, together with other initiation factors, stimulates binding of mRNA and methionyl-tRNAi to the 40S ribosome. The eIF-3 complex specifically targets and initiates translation of a subset of mRNAs involved in cell proliferation. In Brugia malayi (Filarial nematode worm), this protein is Eukaryotic translation initiation factor 3 subunit A.